A 465-amino-acid polypeptide reads, in one-letter code: Cysteine--tRNA ligase (465 aa).

Cysteine 29 is a binding site for Zn(2+). The 'HIGH' region signature appears at 31–41 (PTVYNYIHIGN). The Zn(2+) site is built by cysteine 209, histidine 234, and glutamate 238. Positions 266 to 270 (KMSKS) match the 'KMSKS' region motif. Lysine 269 is a binding site for ATP. Serine 270 bears the Phosphoserine mark.

Belongs to the class-I aminoacyl-tRNA synthetase family. In terms of assembly, monomer. Zn(2+) is required as a cofactor.

Its subcellular location is the cytoplasm. It catalyses the reaction tRNA(Cys) + L-cysteine + ATP = L-cysteinyl-tRNA(Cys) + AMP + diphosphate. In Bacillus anthracis (strain A0248), this protein is Cysteine--tRNA ligase.